Reading from the N-terminus, the 350-residue chain is Inner membrane protein YhiM (350 aa).

The Cytoplasmic segment spans residues 1 to 2 (MN). A helical membrane pass occupies residues 3–23 (IYIGWLFKLIPLIMGLICIAL). Topologically, residues 24–41 (GGFVLESSGQSEYFVAGH) are periplasmic. Residues 42–62 (VLISLAAICLALFTTAFIIIS) form a helical membrane-spanning segment. The Cytoplasmic segment spans residues 63 to 74 (QLTRGVNTFYNT). The chain crosses the membrane as a helical span at residues 75–95 (LFPIIGYAGSIITMIWGWALL). Over 96 to 104 (AGNDVMADE) the chain is Periplasmic. Residues 105–125 (FVAGHVIFGVGMIAACVSTVA) traverse the membrane as a helical segment. Residues 126 to 157 (ASSGHFLLIPKNAAGSKSDGTPVQAYSSLIGN) lie on the Cytoplasmic side of the membrane. The helical transmembrane segment at 158–178 (CLIAVPVLLTLLGFIWSITLL) threads the bilayer. Topologically, residues 179 to 190 (RSADITPHYVAG) are periplasmic. Residues 191 to 211 (HVLLGLTAICACLIGLVATIV) form a helical membrane-spanning segment. At 212 to 225 (HQTRNTFSTKEHWL) the chain is on the cytoplasmic side. A helical membrane pass occupies residues 226–246 (WCYWVIFLGSITVLQGIYVLV). At 247-257 (SSDASARLAPG) the chain is on the periplasmic side. The helical transmembrane segment at 258–278 (IILICLGMICYSIFSKVWLLA) threads the bilayer. Residues 279 to 290 (LVWRRTCSLANR) lie on the Cytoplasmic side of the membrane. A helical transmembrane segment spans residues 291-311 (IPMIPVFTCLFCLFLASFLAE). The Periplasmic segment spans residues 312–324 (MAQTDMGYFIPSR). Residues 325 to 345 (VLVGLGAVCFTLFSIVSILEA) traverse the membrane as a helical segment. The Cytoplasmic segment spans residues 346-350 (GSAKK).

The protein localises to the cell inner membrane. The sequence is that of Inner membrane protein YhiM (yhiM) from Escherichia coli (strain K12).